Here is a 90-residue protein sequence, read N- to C-terminus: RNA-binding protein Hfq (90 aa).

A Sm domain is found at 9–69; the sequence is DRFLNHLRVN…ISTIIPSSYV (61 aa).

This sequence belongs to the Hfq family. In terms of assembly, homohexamer.

Its function is as follows. RNA chaperone that binds small regulatory RNA (sRNAs) and mRNAs to facilitate mRNA translational regulation in response to envelope stress, environmental stress and changes in metabolite concentrations. Also binds with high specificity to tRNAs. The protein is RNA-binding protein Hfq of Thermotoga petrophila (strain ATCC BAA-488 / DSM 13995 / JCM 10881 / RKU-1).